Here is an 821-residue protein sequence, read N- to C-terminus: MMCLIIYLSIFLIIVSRMLTGLPMMDRPDEGGLARRTVGEVEGEFSYRDDVDVADVRNLFIMLPKNGSDIFLFIFDRRSQRQRGTMFLFPKAGFVQPTPAKVRDEAAAAPFGFISPVYPLSSLLFNPYNGRYLTTRHLIAFEVTPESSLHDWYFARSPTTATQTQPLGHITNPPRRSPKDKPTTSGHTDLIIRYCALELDFFQDTRRQRDGIYLPNYEAVWPLAMNFLEGMWIWSNRTLVNVTIGVGFMGFSLTSISYPPLEIIVTPHYTNARMITRFKSSLVLDPPGPSEGPLYKVYVLGYGNNRINGSFYKTMRTIASYPRTKPRLSLPPFHGTYGTALFLSHATPQDMDGTTAYISKISTRLATALFSLSEVRRLSGYVAIDELIDLDFNTRLLANTLLADGMQNFQDPINITYYYNSDVGRTHLRDALDTIDHQHVSHGSLITRARYLQLIYTYTSMEKQSQLSLKLSGDIVKDLYLETLYSDVVRWNTTAKQALFLSSMLIYIAGNIQSSVEQEAINAGRMLFLQCTSMCTTEHASTVRWNPQQILYDLTKSSTRFNIFDGFSPCMASNRYDIISPYGILDLFSAFPISSYRSIEKPAVDSNTHNIIFNLRNLYTFIPELFSCPGVSSNHQRPIAVLPIGINCTYLITRRDPRRGTLYIVDGIDVSNPIIISYLRSGECGIERGIILPGNLNNPENTDQCLYCGCVFMRYKSSGEIVDLLLINDKAVELELVAGENSTISAFNPTKYSSPSSVLLLFPNGTIVTLMAFTSHEVIVFSSNFIWASIGGVFAACLIIYIIIKMLCSFTPDVRYTLLNN.

Positions 1–20 (MMCLIIYLSIFLIIVSRMLT) are cleaved as a signal peptide. At 21–783 (GLPMMDRPDE…TSHEVIVFSS (763 aa)) the chain is on the virion surface side. N-linked (GlcNAc...) asparagine; by host glycosylation is present at asparagine 66. Residues 163 to 186 (QTQPLGHITNPPRRSPKDKPTTSG) form a disordered region. Asparagine 236, asparagine 241, asparagine 308, asparagine 414, asparagine 492, asparagine 647, asparagine 741, and asparagine 764 each carry an N-linked (GlcNAc...) asparagine; by host glycan. Residues 236-299 (NRTLVNVTIG…SEGPLYKVYV (64 aa)) form an interaction with gL region. The helical transmembrane segment at 784–804 (NFIWASIGGVFAACLIIYIII) threads the bilayer. Residues 805-821 (KMLCSFTPDVRYTLLNN) lie on the Intravirion side of the membrane.

Belongs to the herpesviridae glycoprotein H family. Interacts with glycoprotein L (gL); this interaction is necessary for the correct processing and cell surface expression of gH. The heterodimer gH/gL seems to interact with gB trimers during fusion. In terms of processing, N-glycosylated, O-glycosylated, and sialylated.

The protein resides in the virion membrane. It is found in the host cell membrane. It localises to the host endosome membrane. The heterodimer glycoprotein H-glycoprotein L is required for the fusion of viral and plasma membranes leading to virus entry into the host cell. Following initial binding to host receptor, membrane fusion is mediated by the fusion machinery composed of gB and the heterodimer gH/gL. May also be involved in the fusion between the virion envelope and the outer nuclear membrane during virion morphogenesis. This chain is Envelope glycoprotein H, found in Feline herpesvirus 1 (FeHV-1).